Consider the following 416-residue polypeptide: Imidazolonepropionase (416 aa).

Residues H78 and H80 each coordinate Fe(3+). Zn(2+) contacts are provided by H78 and H80. 4-imidazolone-5-propanoate is bound by residues R87, Y150, and H183. Y150 serves as a coordination point for N-formimidoyl-L-glutamate. Position 248 (H248) interacts with Fe(3+). Residue H248 coordinates Zn(2+). Q251 is a binding site for 4-imidazolone-5-propanoate. Fe(3+) is bound at residue D323. Residue D323 coordinates Zn(2+). Residues N325 and G327 each contribute to the N-formimidoyl-L-glutamate site. T328 contributes to the 4-imidazolone-5-propanoate binding site.

Belongs to the metallo-dependent hydrolases superfamily. HutI family. Zn(2+) serves as cofactor. Fe(3+) is required as a cofactor.

The protein localises to the cytoplasm. It catalyses the reaction 4-imidazolone-5-propanoate + H2O = N-formimidoyl-L-glutamate. The protein operates within amino-acid degradation; L-histidine degradation into L-glutamate; N-formimidoyl-L-glutamate from L-histidine: step 3/3. Functionally, catalyzes the hydrolytic cleavage of the carbon-nitrogen bond in imidazolone-5-propanoate to yield N-formimidoyl-L-glutamate. It is the third step in the universal histidine degradation pathway. This Vibrio campbellii (strain ATCC BAA-1116) protein is Imidazolonepropionase.